Consider the following 403-residue polypeptide: MANDFLFTSESVSEGHPDKVADQISDAILDALLRQDPRSRVAAETLTNTGLVVLAGEISTNAHVDYIQVARDTIRRIGYDDTDYGIDYKGCAVLVAYDKQSNDIAQGVDHASDDHLNTGAGDQGLMFGYACDETPELMPAPIYYAHRLVERQAQLRKDGRLPFLRPDAKSQVTLRYVDGKPHSIDTVVLSTQHHPDQSATATTMKQSFIDAVIEEIIRPVLPKEWLHDTRFLINPTGRFVTGGPQGDCGLTGRKIIVDTYGGACPHGGGAFSGKDPTKVDRSAAYAARHVAKNVVAAGLARQCQIQVAYAIGVAEPMNITVYTEGTGVIADERIAALIKQHFDLRPRGIIQMLDLLRPIYEKTAAYGHFGREEPEFTWERTDKAAALRAAAGLSPGEHHRKEG.

ATP is bound at residue H16. D18 is a binding site for Mg(2+). Residue E44 participates in K(+) binding. Residues E57 and Q100 each coordinate L-methionine. Positions 100–110 are flexible loop; sequence QSNDIAQGVDH. Residues 167–169, 238–239, D247, 253–254, A270, and K274 contribute to the ATP site; these read DAK, RF, and RK. Residue D247 coordinates L-methionine. K278 contacts L-methionine.

The protein belongs to the AdoMet synthase family. Homotetramer; dimer of dimers. The cofactor is Mg(2+). It depends on K(+) as a cofactor.

It is found in the cytoplasm. It catalyses the reaction L-methionine + ATP + H2O = S-adenosyl-L-methionine + phosphate + diphosphate. It participates in amino-acid biosynthesis; S-adenosyl-L-methionine biosynthesis; S-adenosyl-L-methionine from L-methionine: step 1/1. In terms of biological role, catalyzes the formation of S-adenosylmethionine (AdoMet) from methionine and ATP. The overall synthetic reaction is composed of two sequential steps, AdoMet formation and the subsequent tripolyphosphate hydrolysis which occurs prior to release of AdoMet from the enzyme. The chain is S-adenosylmethionine synthase from Verminephrobacter eiseniae (strain EF01-2).